Reading from the N-terminus, the 467-residue chain is Probable glutamate decarboxylase gamma (467 aa).

N6-(pyridoxal phosphate)lysine is present on lysine 278.

It belongs to the group II decarboxylase family. Requires pyridoxal 5'-phosphate as cofactor.

The catalysed reaction is L-glutamate + H(+) = 4-aminobutanoate + CO2. The chain is Probable glutamate decarboxylase gamma from Listeria monocytogenes serovar 1/2a (strain ATCC BAA-679 / EGD-e).